The chain runs to 1790 residues: Non-reducing polyketide synthase gsfA (1790 aa).

An N-terminal acylcarrier protein transacylase domain (SAT) region spans residues 20 to 263; it reads GDQRTLFRKL…AMRKIQGMWH (244 aa). The Ketosynthase family 3 (KS3) domain maps to 392–822; the sequence is SSKIAVVGMS…GGNTAMIIEE (431 aa). Active-site for beta-ketoacyl synthase activity residues include C563, H698, and H741. A malonyl-CoA:ACP transacylase (MAT) domain region spans residues 922–1223; it reads FAFAGQGTFY…CSTLHRDSDN (302 aa). The interval 1298–1615 is product template (PT) domain; sequence TSSIHRLYSE…PRIMLNRFFQ (318 aa). Residues 1302–1435 are N-terminal hotdog fold; sequence HRLYSENYDS…AYYEDPSTWL (134 aa). A PKS/mFAS DH domain is found at 1302–1611; it reads HRLYSENYDS…FRQWPRIMLN (310 aa). The Proton acceptor; for dehydratase activity role is filled by H1334. The segment at 1460-1611 is C-terminal hotdog fold; the sequence is MANKLTTSLA…FRQWPRIMLN (152 aa). Catalysis depends on D1518, which acts as the Proton donor; for dehydratase activity. Disordered regions lie at residues 1621 to 1648 and 1686 to 1718; these read PPAP…EKTT and LDYS…ADGA. A compositionally biased stretch (basic and acidic residues) spans 1699-1708; sequence SDERIEKTDS. One can recognise a Carrier domain in the interval 1716-1790; sequence DGANDVTSRA…TIGDLKKLLS (75 aa). At S1753 the chain carries O-(pantetheine 4'-phosphoryl)serine.

The catalysed reaction is 6 malonyl-CoA + acetyl-CoA + 4 H(+) = 2-(2,4-dihydroxy-6-oxidobenzoyl)-5-hydroxy-3-methylbenzenolate + 6 CO2 + 7 CoA + H2O. The protein operates within secondary metabolite biosynthesis; terpenoid biosynthesis. In terms of biological role, norlichexanthone synthase; part of the gene cluster that mediates the biosynthesis of griseofulvin, an important antifungal drug that has been in use for a long time for treating dermatophyte infections. The first step of the pathway is the formation of the heptaketide backbone by gsfA which is initiated by priming with acetyl-CoA, followed by sequential condensations of 6 malonyl-CoA units. The resulting benzophenone can undergo a spontaneous dehydration to form norlichexanthone. However, the true precursor for the griseofulvin biosynthesis is not norlichexanthone, but the heptaketide benzophenone that is O-methylated at 3-OH by gsfB to produce griseophenone D which is further methylated at 9-OH by gsfC to yield griseophenone C. Griseophenone C is then substrate of halogenase gsfI which is responsible for the regio-specific chlorination at the C13 position to form griseophenone B. The cytochrome P450 gsfF catalyzes the coupling of orcinol and phloroglucinol rings in griseophenone B to form desmethyl-dehydrogriseofulvin A which is further methylated at 5-OH by gsfD to yield dehydrogriseofulvin. Finally, gsfE performs stereospecific reduction of enone 18 of dehydrogriseofulvin to afford the final product griseofulvin. The sequence is that of Non-reducing polyketide synthase gsfA from Penicillium aethiopicum.